Here is a 65-residue protein sequence, read N- to C-terminus: Mating-type pheromone BBP1(2) (65 aa).

Cysteine 62 is modified (cysteine methyl ester). Cysteine 62 is lipidated: S-farnesyl cysteine. Positions 63–65 (VVA) are cleaved as a propeptide — removed in mature form.

It localises to the cell membrane. Its function is as follows. Activates B-regulated development. The polypeptide is Mating-type pheromone BBP1(2) (BBP1(2)) (Schizophyllum commune (Split gill fungus)).